The primary structure comprises 66 residues: Large ribosomal subunit protein uL29 (66 aa).

This sequence belongs to the universal ribosomal protein uL29 family.

The protein is Large ribosomal subunit protein uL29 of Rhizobium rhizogenes (strain K84 / ATCC BAA-868) (Agrobacterium radiobacter).